A 541-amino-acid chain; its full sequence is 2-succinyl-5-enolpyruvyl-6-hydroxy-3-cyclohexene-1-carboxylate synthase (541 aa).

Belongs to the TPP enzyme family. MenD subfamily. In terms of assembly, homodimer. Requires Mg(2+) as cofactor. The cofactor is Mn(2+). Thiamine diphosphate serves as cofactor.

The catalysed reaction is isochorismate + 2-oxoglutarate + H(+) = 5-enolpyruvoyl-6-hydroxy-2-succinyl-cyclohex-3-ene-1-carboxylate + CO2. It functions in the pathway quinol/quinone metabolism; 1,4-dihydroxy-2-naphthoate biosynthesis; 1,4-dihydroxy-2-naphthoate from chorismate: step 2/7. Its pathway is quinol/quinone metabolism; menaquinone biosynthesis. In terms of biological role, catalyzes the thiamine diphosphate-dependent decarboxylation of 2-oxoglutarate and the subsequent addition of the resulting succinic semialdehyde-thiamine pyrophosphate anion to isochorismate to yield 2-succinyl-5-enolpyruvyl-6-hydroxy-3-cyclohexene-1-carboxylate (SEPHCHC). This Leuconostoc citreum (strain KM20) protein is 2-succinyl-5-enolpyruvyl-6-hydroxy-3-cyclohexene-1-carboxylate synthase.